Consider the following 274-residue polypeptide: MAIQQEIIAALGVKPTIDPAAEFRVSVEFLKAYLKKHIFVRTLVLGISGGQDSTLTGKICQQAISELRQETGIADYQFIAVRLPHGEQKDEADCKDAIAFIEPDRVITINIKSAIQASEATLSEAGIVLSDYVKGNEKARERMKAQYSIAGMTAGLVVGTDHAAEAVTGFFTKYGDGGTDINPLFRLNKRQGRALLQHLGCPEHLYLKAPTADLEEESPALPDETALGVTYEMLDDYLEGKTIDAAAARVIENWYLRTEHKRHPPVTVFDDFWK.

Residue 46-53 (GISGGQDS) coordinates ATP. Mg(2+) is bound at residue Asp-52. Position 140 (Arg-140) interacts with deamido-NAD(+). Thr-160 contributes to the ATP binding site. Glu-165 contacts Mg(2+). Deamido-NAD(+) is bound by residues Lys-173 and Asp-180. 2 residues coordinate ATP: Lys-189 and Thr-211. 260 to 261 (HK) contributes to the deamido-NAD(+) binding site.

Belongs to the NAD synthetase family. In terms of assembly, homodimer.

It carries out the reaction deamido-NAD(+) + NH4(+) + ATP = AMP + diphosphate + NAD(+) + H(+). The protein operates within cofactor biosynthesis; NAD(+) biosynthesis; NAD(+) from deamido-NAD(+) (ammonia route): step 1/1. Its function is as follows. Catalyzes the ATP-dependent amidation of deamido-NAD to form NAD. Uses ammonia as a nitrogen source. The polypeptide is NH(3)-dependent NAD(+) synthetase (Sodalis glossinidius (strain morsitans)).